A 500-amino-acid chain; its full sequence is Alpha-L-arabinofuranosidase (500 aa).

The first 21 residues, 1-21, serve as a signal peptide directing secretion; sequence MLSNARIIAAGCIAAGSLVAA. Asparagine 467 carries N-linked (GlcNAc...) asparagine glycosylation.

This sequence belongs to the glycosyl hydrolase 54 family.

The enzyme catalyses Hydrolysis of terminal non-reducing alpha-L-arabinofuranoside residues in alpha-L-arabinosides.. It functions in the pathway glycan metabolism; L-arabinan degradation. The sequence is that of Alpha-L-arabinofuranosidase (abf1) from Hypocrea jecorina (Trichoderma reesei).